Reading from the N-terminus, the 171-residue chain is MTRQPRVGVIMGSDSDWSVMQDAAHALAEFDIPIEVRVVSAHRTPAEMFDYARNAVDRSIAVIIAGAGGAAHLPGMVASATPLPVIGVPVPLARLDGLDSLLSIVQMPAGVPVATVSIGGARNAGLLAVRILGSSDLQLRAQLVAFQDRLADTVRAKDADLQRFRGKLIGD.

Substrate is bound by residues S13, D16, and R43.

It belongs to the AIR carboxylase family. Class I subfamily.

The catalysed reaction is 5-carboxyamino-1-(5-phospho-D-ribosyl)imidazole + H(+) = 5-amino-1-(5-phospho-D-ribosyl)imidazole-4-carboxylate. The protein operates within purine metabolism; IMP biosynthesis via de novo pathway; 5-amino-1-(5-phospho-D-ribosyl)imidazole-4-carboxylate from 5-amino-1-(5-phospho-D-ribosyl)imidazole (N5-CAIR route): step 2/2. In terms of biological role, catalyzes the conversion of N5-carboxyaminoimidazole ribonucleotide (N5-CAIR) to 4-carboxy-5-aminoimidazole ribonucleotide (CAIR). In Mycobacterium leprae (strain TN), this protein is N5-carboxyaminoimidazole ribonucleotide mutase.